We begin with the raw amino-acid sequence, 523 residues long: uncharacterized protein (523 aa).

The transit peptide at 1–63 directs the protein to the chloroplast; sequence MACVSTCLIL…NRHGIAVVKA (63 aa). 3 helical membrane-spanning segments follow: residues 180–200, 386–406, and 423–443; these read VSFG…IIAL, ALVI…NTLL, and IYPL…IRWF.

The protein localises to the plastid. It localises to the chloroplast membrane. This is an uncharacterized protein from Arabidopsis thaliana (Mouse-ear cress).